The chain runs to 433 residues: Alpha-(1,3)-fucosyltransferase fut-1 (433 aa).

Residues 1-12 are Cytoplasmic-facing; sequence MTARSIKLFFAR. Residues 13–32 traverse the membrane as a helical; Signal-anchor for type II membrane protein segment; sequence WKYLMFACCITYLLVIYAPI. Over 33–433 the chain is Lumenal; it reads SKSEQKDWKE…GTLVDSIPLD (401 aa). 2 N-linked (GlcNAc...) asparagine glycosylation sites follow: Asn194 and Asn359.

It belongs to the glycosyltransferase 10 family. It depends on Mg(2+) as a cofactor. Mn(2+) is required as a cofactor. Post-translationally, N-glycosylated. Glycosylation is important for enzymatic activity. As to expression, expressed in the pharyngeal-intestinal (PI) and anal valves. Expressed in ASG neurons and in one or two neurons in the retrovesicular ganglion and two neurons posterior to the PI valve and PHA and PHB neurons in the tail.

It localises to the golgi apparatus. The protein localises to the golgi stack membrane. It catalyses the reaction N(4)-{beta-D-GlcNAc-(1-&gt;2)-alpha-D-Man-(1-&gt;3)-[beta-D-GlcNAc-(1-&gt;2)-alpha-D-Man-(1-&gt;6)]-beta-D-Man-(1-&gt;4)-beta-D-GlcNAc-(1-&gt;4)-beta-D-GlcNAc}-L-asparaginyl-[protein] + GDP-beta-L-fucose = N(4)-{beta-D-GlcNAc-(1-&gt;2)-alpha-D-Man-(1-&gt;3)-[beta-D-GlcNAc-(1-&gt;2)-alpha-D-Man-(1-&gt;6)]-beta-D-Man-(1-&gt;4)-beta-D-GlcNAc-(1-&gt;4)-[alpha-L-Fuc(1-&gt;3)]-beta-D-GlcNAc}-L-asparaginyl-[protein] + GDP + H(+). It participates in protein modification; protein glycosylation. With respect to regulation, inhibited by Cu(2+) or Zn(2+) and to a lesser extent Ni(2+) ions. Preferentially catalyzes the addition of fucose in alpha 1-3 linkage to the first GlcNAc residue (with or without alpha 1,6-linked fucose), next to the peptide chains in N-glycans. Unlike in mammals, does not require the prior action of N-acetylglucosaminyltransferase I to generate complex N-glycans. In Caenorhabditis elegans, this protein is Alpha-(1,3)-fucosyltransferase fut-1.